The chain runs to 700 residues: Probable E3 ubiquitin ligase complex SCF subunit sconB (700 aa).

Positions 195–241 (IDFLTALPPEISFKILCYLDTTSLCKAAQVSRRWRALADDDVVWHRM) constitute an F-box domain. The segment at 282–313 (SEQSTEDETGSPAPESASSNAKRKPESDDEDT) is disordered. WD repeat units lie at residues 369–406 (GHTNGIMCLQFEDNILATGSYDATIKIWDTETGEELRT), 409–448 (GHESGIRCLQFDDTKLISGSMDRSLKVWNWRTGECISTYT), 450–486 (HRGGVIGLHFDATILASASVDKTVKIWNFEDKSTCLL), 488–529 (GHTD…RTFH), 583–626 (ETQS…CLRT), 627–666 (FFGHLEGVWALAADTLRIVSGAEDRMVKIWDPRTGKCERT), and 669–700 (GHSGPVTCIGLGDSRFATGSEDCEVRMYGFQS). Residues 556 to 598 (NDNVSVTSGDSPAASPRGIPGLDAGTSETQSSPFGPAFDNGRP) form a disordered region.

The protein belongs to the WD repeat MET30/SCONB/SCON-2 family. In terms of assembly, component of the SCF(sconB) E3 ubiquitin ligase complex.

It participates in protein modification; protein ubiquitination. Functionally, component of the SCF(sconB) E3 ubiquitin ligase complex involved in the regulation of sulfur metabolite repression, probably by mediating the inactivation or degradation of the metR transcription factor. The chain is Probable E3 ubiquitin ligase complex SCF subunit sconB (sconB) from Aspergillus clavatus (strain ATCC 1007 / CBS 513.65 / DSM 816 / NCTC 3887 / NRRL 1 / QM 1276 / 107).